Here is a 402-residue protein sequence, read N- to C-terminus: Multidrug resistance protein MdtH (402 aa).

The next 11 helical transmembrane spans lie at 13–33 (YFLL…FPLI), 34–54 (SIRF…ALGL), 99–116 (PWLL…GTLF), 139–159 (LLMM…SWLL), 165–185 (LVCA…AWLL), 214–234 (VLTL…LPIM), 243–263 (AAVK…LYPI), 277–297 (LMAG…VSSV), 300–320 (LFVL…ARET), 340–360 (LGLA…FDSG), and 368–388 (LPWV…WWQF).

The protein belongs to the major facilitator superfamily. DHA1 family. MdtH (TC 2.A.1.2.21) subfamily.

The protein resides in the cell inner membrane. This Enterobacter sp. (strain 638) protein is Multidrug resistance protein MdtH.